Consider the following 375-residue polypeptide: Chaperone protein DnaJ (375 aa).

The J domain occupies 5–70 (DYYSLLEVER…QKRAAYDRYG (66 aa)). The CR-type zinc-finger motif lies at 135–213 (GKTVDIEIDV…CHGEGRCEKH (79 aa)). The Zn(2+) site is built by cysteine 148, cysteine 151, cysteine 165, cysteine 168, cysteine 187, cysteine 190, cysteine 201, and cysteine 204. CXXCXGXG motif repeat units lie at residues 148–155 (CDACHGSG), 165–172 (CDTCHGSG), 187–194 (CPVCQGKG), and 201–208 (CPECHGEG).

It belongs to the DnaJ family. Homodimer. Zn(2+) serves as cofactor.

It localises to the cytoplasm. In terms of biological role, participates actively in the response to hyperosmotic and heat shock by preventing the aggregation of stress-denatured proteins and by disaggregating proteins, also in an autonomous, DnaK-independent fashion. Unfolded proteins bind initially to DnaJ; upon interaction with the DnaJ-bound protein, DnaK hydrolyzes its bound ATP, resulting in the formation of a stable complex. GrpE releases ADP from DnaK; ATP binding to DnaK triggers the release of the substrate protein, thus completing the reaction cycle. Several rounds of ATP-dependent interactions between DnaJ, DnaK and GrpE are required for fully efficient folding. Also involved, together with DnaK and GrpE, in the DNA replication of plasmids through activation of initiation proteins. This is Chaperone protein DnaJ from Zymomonas mobilis subsp. mobilis (strain ATCC 31821 / ZM4 / CP4).